Consider the following 281-residue polypeptide: Phosphonates import ATP-binding protein PhnC (281 aa).

The region spanning 5–253 is the ABC transporter domain; sequence IEVCGLTKSF…MLRDLYGTEA (249 aa). ATP is bound at residue 38 to 45; that stretch reads GASGSGKS.

It belongs to the ABC transporter superfamily. Phosphonates importer (TC 3.A.1.9.1) family. The complex is composed of two ATP-binding proteins (PhnC), two transmembrane proteins (PhnE) and a solute-binding protein (PhnD).

It is found in the cell inner membrane. The enzyme catalyses phosphonate(out) + ATP + H2O = phosphonate(in) + ADP + phosphate + H(+). Its function is as follows. Part of the ABC transporter complex PhnCDE involved in phosphonates import. Responsible for energy coupling to the transport system. This chain is Phosphonates import ATP-binding protein PhnC, found in Cupriavidus pinatubonensis (strain JMP 134 / LMG 1197) (Cupriavidus necator (strain JMP 134)).